We begin with the raw amino-acid sequence, 191 residues long: Flavin prenyltransferase UbiX (191 aa).

FMN contacts are provided by residues 13 to 15 (GAS), threonine 39, 90 to 93 (TMKT), and arginine 125. The dimethylallyl phosphate site is built by tyrosine 155 and lysine 171.

Belongs to the UbiX/PAD1 family.

The catalysed reaction is dimethylallyl phosphate + FMNH2 = prenylated FMNH2 + phosphate. Flavin prenyltransferase that catalyzes the synthesis of the prenylated FMN cofactor (prenyl-FMN) for 4-hydroxy-3-polyprenylbenzoic acid decarboxylase UbiD. The prenyltransferase is metal-independent and links a dimethylallyl moiety from dimethylallyl monophosphate (DMAP) to the flavin N5 and C6 atoms of FMN. This Methanothermobacter thermautotrophicus (strain ATCC 29096 / DSM 1053 / JCM 10044 / NBRC 100330 / Delta H) (Methanobacterium thermoautotrophicum) protein is Flavin prenyltransferase UbiX.